We begin with the raw amino-acid sequence, 203 residues long: Guanylate kinase (203 aa).

A Guanylate kinase-like domain is found at 3–181 (GTLYIVAAPS…AVSEMCAIFT (179 aa)). 10–17 (APSGAGKS) serves as a coordination point for ATP.

It belongs to the guanylate kinase family.

The protein resides in the cytoplasm. It carries out the reaction GMP + ATP = GDP + ADP. Its function is as follows. Essential for recycling GMP and indirectly, cGMP. In Xanthomonas oryzae pv. oryzae (strain MAFF 311018), this protein is Guanylate kinase.